Here is a 458-residue protein sequence, read N- to C-terminus: Tyrosine phenol-lyase (458 aa).

K258 is subject to N6-(pyridoxal phosphate)lysine.

It belongs to the beta-eliminating lyase family. As to quaternary structure, homotetramer. Pyridoxal 5'-phosphate serves as cofactor.

It catalyses the reaction L-tyrosine + H2O = phenol + pyruvate + NH4(+). This Pasteurella multocida (strain Pm70) protein is Tyrosine phenol-lyase (tpl).